Consider the following 65-residue polypeptide: Large ribosomal subunit protein bL33c (65 aa).

The protein belongs to the bacterial ribosomal protein bL33 family.

It localises to the plastid. Its subcellular location is the chloroplast. In Chara vulgaris (Common stonewort), this protein is Large ribosomal subunit protein bL33c.